A 1244-amino-acid chain; its full sequence is ATP-dependent RNA helicase DHX8 (1244 aa).

Residue K140 forms a Glycyl lysine isopeptide (Lys-Gly) (interchain with G-Cter in SUMO2) linkage. Disordered stretches follow at residues L152–G289 and D361–H396. Basic and acidic residues predominate over residues E160–D169. A compositionally biased stretch (basic residues) spans R170 to S179. Basic and acidic residues predominate over residues R180–R220. Over residues D221–S234 the composition is skewed to basic residues. Over residues F256–P283 the composition is skewed to basic and acidic residues. The S1 motif domain occupies G289–K360. A compositionally biased stretch (basic and acidic residues) spans T386–T395. Residue S419 is modified to Phosphoserine. A Glycyl lysine isopeptide (Lys-Gly) (interchain with G-Cter in SUMO2) cross-link involves residue K423. S484 is modified (phosphoserine). The Helicase ATP-binding domain occupies V599–P762. G612–T619 lines the ATP pocket. The short motif at D709–H712 is the DEAH box element. The Helicase C-terminal domain maps to Y780 to G960.

This sequence belongs to the DEAD box helicase family. DEAH subfamily. DDX8/PRP22 sub-subfamily. As to quaternary structure, identified in the spliceosome C complex. Interacts with ARRB2; the interaction is detected in the nucleus upon OR1D2 stimulation. Interacts with SRRM2. Interacts with CACTIN.

The protein localises to the nucleus. The enzyme catalyses ATP + H2O = ADP + phosphate + H(+). Functionally, involved in pre-mRNA splicing as component of the spliceosome. Facilitates nuclear export of spliced mRNA by releasing the RNA from the spliceosome. The protein is ATP-dependent RNA helicase DHX8 (Dhx8) of Mus musculus (Mouse).